The sequence spans 221 residues: GTP-binding nuclear protein Ran-2 (221 aa).

In terms of domain architecture, Small GTPase Ran-type spans 10–174 (DYPSFKLVIV…LYLARKLAGD (165 aa)). Residue 21-28 (DGGTGKTT) participates in GTP binding. Positions 40–48 (KKYEPTIGV) are switch-I. Residues Gly-71, 125–128 (NKVD), and 153–155 (SAK) each bind GTP. Residues 71–87 (GQEKFGGLRDGYYIHGQ) are switch-II. Low complexity predominate over residues 202 to 212 (ADLAAAAAQPL). Residues 202 to 221 (ADLAAAAAQPLPDDDDDAFE) form a disordered region.

The protein belongs to the small GTPase superfamily. Ran family. In terms of assembly, found in a nuclear export complex with RanGTP, exportin and pre-miRNA. Interacts with RanBP1a and RanBP1b. Interacts with PHRIP1. Interacts with KPNB1. Binds to PHIP1.

The protein resides in the nucleus. The protein localises to the nucleus envelope. In terms of biological role, GTP-binding protein involved in nucleocytoplasmic transport. Required for the import of protein into the nucleus and also for RNA export. Involved in chromatin condensation and control of cell cycle. In Arabidopsis thaliana (Mouse-ear cress), this protein is GTP-binding nuclear protein Ran-2.